We begin with the raw amino-acid sequence, 171 residues long: tRNA-specific adenosine deaminase (171 aa).

Positions 6-133 (EEQTYFMQEA…ERLNHRVQVE (128 aa)) constitute a CMP/dCMP-type deaminase domain. H57 is a binding site for Zn(2+). E59 acts as the Proton donor in catalysis. Residues C87 and C90 each contribute to the Zn(2+) site.

This sequence belongs to the cytidine and deoxycytidylate deaminase family. As to quaternary structure, homodimer. Zn(2+) serves as cofactor.

The enzyme catalyses adenosine(34) in tRNA + H2O + H(+) = inosine(34) in tRNA + NH4(+). Its function is as follows. Catalyzes the deamination of adenosine to inosine at the wobble position 34 of tRNA(Arg2). The polypeptide is tRNA-specific adenosine deaminase (Streptococcus pyogenes serotype M3 (strain ATCC BAA-595 / MGAS315)).